The chain runs to 406 residues: Cysteine desulfurase (406 aa).

Lys226 is modified (N6-(pyridoxal phosphate)lysine). Catalysis depends on Cys364, which acts as the Cysteine persulfide intermediate.

This sequence belongs to the class-V pyridoxal-phosphate-dependent aminotransferase family. Csd subfamily. Homodimer. Interacts with SufE and the SufBCD complex composed of SufB, SufC and SufD. The interaction with SufE is required to mediate the direct transfer of the sulfur atom from the S-sulfanylcysteine. Pyridoxal 5'-phosphate serves as cofactor.

It localises to the cytoplasm. It catalyses the reaction (sulfur carrier)-H + L-cysteine = (sulfur carrier)-SH + L-alanine. It carries out the reaction L-selenocysteine + AH2 = hydrogenselenide + L-alanine + A + H(+). The protein operates within cofactor biosynthesis; iron-sulfur cluster biosynthesis. Functionally, cysteine desulfurases mobilize the sulfur from L-cysteine to yield L-alanine, an essential step in sulfur metabolism for biosynthesis of a variety of sulfur-containing biomolecules. Component of the suf operon, which is activated and required under specific conditions such as oxidative stress and iron limitation. Acts as a potent selenocysteine lyase in vitro, that mobilizes selenium from L-selenocysteine. Selenocysteine lyase activity is however unsure in vivo. This Cronobacter sakazakii (strain ATCC BAA-894) (Enterobacter sakazakii) protein is Cysteine desulfurase.